The sequence spans 259 residues: uncharacterized protein (259 aa).

It belongs to the chlamydial CPn_0128/CT_035/TC_0305 family.

This is an uncharacterized protein from Chlamydia muridarum (strain MoPn / Nigg).